A 1239-amino-acid chain; its full sequence is WD repeat-containing protein 11 (1239 aa).

WD repeat units follow at residues 63–112, 115–158, 358–398, 476–515, 571–610, 713–750, 752–792, 798–836, and 898–944; these read RHKA…AHCE, EHSK…KLWK, TKTV…SKSS, RMCP…LHKE, NDEP…LLRE, GSMG…SRGV, THRG…MVSS, NVNY…ASYR, and SLSN…IQAF. The interval 1213 to 1239 is disordered; it reads EDLSQTEGTGTESSPADDTDNSLVNIE. The segment covering 1215–1226 has biased composition (polar residues); the sequence is LSQTEGTGTESS.

In terms of assembly, component of the complex WDR11.

The protein localises to the cytoplasm. It is found in the cytoskeleton. Its subcellular location is the cilium basal body. The protein resides in the nucleus. It localises to the cilium axoneme. The protein localises to the cytoplasmic vesicle. It is found in the golgi apparatus. Its subcellular location is the trans-Golgi network. Involved in the Hedgehog (Hh) signaling pathway, is essential for normal ciliogenesis. Regulates the proteolytic processing of gli3 and cooperates with the transcription factor emx1 in the induction of downstream Hh pathway gene expression and gonadotropin-releasing hormone production. WDR11 complex facilitates the tethering of Adaptor protein-1 complex (AP-1)-derived vesicles. The chain is WD repeat-containing protein 11 (wdr11) from Danio rerio (Zebrafish).